Here is a 407-residue protein sequence, read N- to C-terminus: Acetate kinase (407 aa).

Asn-10 lines the Mg(2+) pocket. Residue Lys-17 participates in ATP binding. Substrate is bound at residue Arg-93. The active-site Proton donor/acceptor is the Asp-150. ATP-binding positions include His-210–Gly-214, Asp-284–Arg-286, and Gly-332–Asn-336. Glu-386 is a binding site for Mg(2+).

It belongs to the acetokinase family. In terms of assembly, homodimer. The cofactor is Mg(2+). Mn(2+) serves as cofactor.

The protein localises to the cytoplasm. The catalysed reaction is acetate + ATP = acetyl phosphate + ADP. It participates in metabolic intermediate biosynthesis; acetyl-CoA biosynthesis; acetyl-CoA from acetate: step 1/2. Its function is as follows. Catalyzes the formation of acetyl phosphate from acetate and ATP. Can also catalyze the reverse reaction. The polypeptide is Acetate kinase (Streptomyces coelicolor (strain ATCC BAA-471 / A3(2) / M145)).